We begin with the raw amino-acid sequence, 286 residues long: Putative 2-aminoethylphosphonate transport system permease protein PhnU (286 aa).

The next 6 membrane-spanning stretches (helical) occupy residues 19–39 (WLLLPLLVLATLFFWPLSLIV), 76–96 (FFATAGCLLLGSAMSLILVFI), 111–131 (FIALPTFLITLAFTFIYGSAG), 150–170 (FLYSMQGVILAEITVFTPLVM), 202–222 (VIFPAALPALMAGGSLCLLLT), and 254–274 (YTVACMIALINIVLSLGLFSL). The ABC transmembrane type-1 domain maps to 68–275 (LLNTLQIAFF…VLSLGLFSLY (208 aa)).

It belongs to the binding-protein-dependent transport system permease family.

The protein localises to the cell inner membrane. In terms of biological role, probably part of the PhnSTUV complex (TC 3.A.1.11.5) involved in 2-aminoethylphosphonate import. Probably responsible for the translocation of the substrate across the membrane. The sequence is that of Putative 2-aminoethylphosphonate transport system permease protein PhnU (phnU) from Salmonella choleraesuis (strain SC-B67).